A 164-amino-acid polypeptide reads, in one-letter code: Phosphopantetheine adenylyltransferase (164 aa).

S9 provides a ligand contact to substrate. ATP is bound by residues 9–10 (SF) and H17. Substrate is bound by residues K41, V78, and R92. ATP contacts are provided by residues 93 to 95 (GLR), E103, and 128 to 134 (SRPITAT).

It belongs to the bacterial CoaD family. In terms of assembly, homohexamer. The cofactor is Mg(2+).

It localises to the cytoplasm. The catalysed reaction is (R)-4'-phosphopantetheine + ATP + H(+) = 3'-dephospho-CoA + diphosphate. Its pathway is cofactor biosynthesis; coenzyme A biosynthesis; CoA from (R)-pantothenate: step 4/5. Reversibly transfers an adenylyl group from ATP to 4'-phosphopantetheine, yielding dephospho-CoA (dPCoA) and pyrophosphate. The protein is Phosphopantetheine adenylyltransferase of Rhizobium leguminosarum bv. trifolii (strain WSM2304).